Reading from the N-terminus, the 414-residue chain is Patatin-like protein 1 (414 aa).

The PNPLA domain occupies 20-224 (LAIDGGGIRG…AANNPTMVAM (205 aa)). The GXGXXG motif lies at 24–29 (GGGIRG). Residues 62-66 (GTSTG) carry the GXSXG motif. S64 (nucleophile) is an active-site residue. D211 serves as the catalytic Proton acceptor. Residues 211-213 (DGG) carry the DGA/G motif.

The protein belongs to the patatin family.

In terms of biological role, possesses non-specific lipolytic acyl hydrolase (LAH) activity. Hydrolyzes phospholipids as well as galactolipids. May play a role in disease resistance. The protein is Patatin-like protein 1 (PLP1) of Oryza sativa subsp. indica (Rice).